The sequence spans 341 residues: Very-long-chain 3-oxoacyl-CoA reductase (341 aa).

The chain crosses the membrane as a helical span at residues 17–37 (ALYGALLLGVYKLTTFALSLV). Residues Val63, Asp117, Asn144, Tyr218, Lys222, Val251, and Ser253 each contribute to the NADP(+) site. The active-site Proton donor is the Tyr218. The active-site Lowers pKa of active site Tyr is Lys222.

It belongs to the short-chain dehydrogenases/reductases (SDR) family.

Its subcellular location is the endoplasmic reticulum membrane. It carries out the reaction a very-long-chain (3R)-3-hydroxyacyl-CoA + NADP(+) = a very-long-chain 3-oxoacyl-CoA + NADPH + H(+). Its pathway is lipid metabolism; fatty acid biosynthesis. Functionally, component of the microsomal membrane bound fatty acid elongation system, which produces the 26-carbon very long-chain fatty acids (VLCFA) from palmitate. Catalyzes the reduction of the 3-ketoacyl-CoA intermediate that is formed in each cycle of fatty acid elongation. VLCFAs serve as precursors for ceramide and sphingolipids. This chain is Very-long-chain 3-oxoacyl-CoA reductase, found in Meyerozyma guilliermondii (strain ATCC 6260 / CBS 566 / DSM 6381 / JCM 1539 / NBRC 10279 / NRRL Y-324) (Yeast).